Reading from the N-terminus, the 102-residue chain is Large ribosomal subunit protein mL63 (102 aa).

Belongs to the mitochondrion-specific ribosomal protein mL63 family.

The protein localises to the mitochondrion. The chain is Large ribosomal subunit protein mL63 (MRPL57) from Bos taurus (Bovine).